The chain runs to 411 residues: Carbohydrate sulfotransferase 1 (411 aa).

Residue M1 is a topological domain, cytoplasmic. The chain crosses the membrane as a helical; Signal-anchor for type II membrane protein span at residues 2–23 (QCSWKAVLLLALASIAIQYTAI). Topologically, residues 24–411 (RTFTAKSFHT…VEERDFRPFL (388 aa)) are lumenal. Residue N56 is glycosylated (N-linked (GlcNAc...) asparagine). 69–75 (TRSGSSF) contacts 3'-phosphoadenylyl sulfate. Residues N145 and N189 are each glycosylated (N-linked (GlcNAc...) asparagine). 234 to 242 (RDPRGILAS) provides a ligand contact to 3'-phosphoadenylyl sulfate. N334 is a glycosylation site (N-linked (GlcNAc...) asparagine). The Cell attachment site motif lies at 337–339 (RGD).

This sequence belongs to the sulfotransferase 1 family. Gal/GlcNAc/GalNAc subfamily.

It is found in the golgi apparatus membrane. The catalysed reaction is 3'-phosphoadenylyl sulfate + keratan = adenosine 3',5'-bisphosphate + keratan 6'-sulfate.. The protein operates within glycan metabolism. In terms of biological role, sulfotransferase that utilizes 3'-phospho-5'-adenylyl sulfate (PAPS) as sulfonate donor to catalyze the transfer of sulfate to position 6 of internal galactose (Gal) residues of keratan. Cooperates with B4GALT4 and B3GNT7 glycosyltransferases and CHST6 sulfotransferase to construct and elongate disulfated disaccharide unit [-&gt;3(6-sulfoGalbeta)1-&gt;4(6-sulfoGlcNAcbeta)1-&gt;] within keratan sulfate polymer. Has a preference for sulfating keratan sulfate, but it also transfers sulfate to the unsulfated polymer. Involved in biosynthesis of phosphacan, a major keratan sulfate proteoglycan in the developing brain. Involved in biosynthesis of 6-sulfoGalbeta-containing O-linked glycans in high endothelial venules of lymph nodes. May act in a synergistic manner with CHST4 to generate sialyl 6',6-disulfo Lewis X motif, a recognition determinant for immune cell receptors implicated in leukocyte trafficking. Catalyzes sulfation of N-acetyllactosamine (LacNAc) oligosaccharides with highest efficiency for sialylated LacNAc structures. The sequence is that of Carbohydrate sulfotransferase 1 (Chst1) from Rattus norvegicus (Rat).